Consider the following 332-residue polypeptide: L-lactate dehydrogenase C chain (332 aa).

Residues 29-57 (GAVG…AVDK) and arginine 99 contribute to the NAD(+) site. The substrate site is built by arginine 106, asparagine 138, and arginine 169. Asparagine 138 contributes to the NAD(+) binding site. The Proton acceptor role is filled by histidine 193. Threonine 248 serves as a coordination point for substrate. The residue at position 301 (serine 301) is a Phosphoserine.

This sequence belongs to the LDH/MDH superfamily. LDH family. Homotetramer. Interacts with RABL2/RABL2A; binds preferentially to GTP-bound RABL2.

The protein localises to the cytoplasm. The enzyme catalyses (S)-lactate + NAD(+) = pyruvate + NADH + H(+). It functions in the pathway fermentation; pyruvate fermentation to lactate; (S)-lactate from pyruvate: step 1/1. In terms of biological role, possible role in sperm motility. This Sus scrofa (Pig) protein is L-lactate dehydrogenase C chain (LDHC).